Consider the following 423-residue polypeptide: G protein-activated inward rectifier potassium channel 2 (423 aa).

Residues 1 to 89 (MAKLTESMTN…IFTTLVDLKW (89 aa)) lie on the Cytoplasmic side of the membrane. Residues serine 16 and serine 23 each carry the phosphoserine modification. A helical membrane pass occupies residues 90-114 (RFNLLIFVMVYTVTWLFFGMIWWLI). At 115–138 (AYIRGDMDHIEDPSWTPCVTNLNG) the chain is on the extracellular side. An intramembrane region (helical; Pore-forming) is located at residues 139-150 (FVSAFLFSIETE). An intramembrane region (pore-forming) is located at residues 151–157 (TTIGYGY). A Selectivity filter motif is present at residues 152–157 (TIGYGY). Residues 158–166 (RVITDKCPE) lie on the Extracellular side of the membrane. A helical transmembrane segment spans residues 167-188 (GIILLLIQSVLGSIVNAFMVGC). Over 189–423 (MFVKISQPKK…VANLENESKV (235 aa)) the chain is Cytoplasmic. The disordered stretch occupies residues 390–423 (NQHAELETEEEEKNLEEQTERNGDVANLENESKV). The short motif at 420–423 (ESKV) is the PDZ-binding element.

This sequence belongs to the inward rectifier-type potassium channel (TC 1.A.2.1) family. KCNJ6 subfamily. Associates with KCNJ3/GIRK1 or KCNJ5/GRIK4 to form a G-protein-activated heteromultimer pore-forming unit. The resulting inward current is much larger. Interacts (via PDZ-binding motif) with SNX27 (via PDZ domain); the interaction is required when endocytosed to prevent degradation in lysosomes and promote recycling to the plasma membrane.

The protein resides in the membrane. The enzyme catalyses K(+)(in) = K(+)(out). Activated by phosphatidylinositol 4,5 biphosphate (PtdIns(4,5)P2). In terms of biological role, inward rectifier potassium channels are characterized by a greater tendency to allow potassium to flow into the cell rather than out of it. Their voltage dependence is regulated by the concentration of extracellular potassium; as external potassium is raised, the voltage range of the channel opening shifts to more positive voltages. The inward rectification is mainly due to the blockage of outward current by internal magnesium. This potassium channel may be involved in the regulation of insulin secretion by glucose and/or neurotransmitters acting through G-protein-coupled receptors. This chain is G protein-activated inward rectifier potassium channel 2 (KCNJ6), found in Pongo abelii (Sumatran orangutan).